The chain runs to 370 residues: Uroporphyrinogen decarboxylase (370 aa).

Substrate-binding positions include 29 to 33 (RQAGR), Asp79, Tyr155, Ser210, and His342.

It belongs to the uroporphyrinogen decarboxylase family. Homodimer.

It localises to the cytoplasm. The catalysed reaction is uroporphyrinogen III + 4 H(+) = coproporphyrinogen III + 4 CO2. It participates in porphyrin-containing compound metabolism; protoporphyrin-IX biosynthesis; coproporphyrinogen-III from 5-aminolevulinate: step 4/4. Functionally, catalyzes the decarboxylation of four acetate groups of uroporphyrinogen-III to yield coproporphyrinogen-III. The sequence is that of Uroporphyrinogen decarboxylase from Acidovorax sp. (strain JS42).